A 117-amino-acid chain; its full sequence is Transcription elongation factor SPT4 (117 aa).

An interaction with SUPT5H region spans residues 1–40 (MSLETVPKDLRHLRACLLCSLVKTIDQFEYDGCDNCESYL). A C4-type zinc finger spans residues 16-36 (CLLCSLVKTIDQFEYDGCDNC).

It belongs to the SPT4 family. As to quaternary structure, interacts with SUPT5H to form the DSIF complex. DSIF interacts with RNA polymerase II and with the positive transcription elongation factor b complex (P-TEFb complex), which is composed of CDK9 and cyclin-T.

It localises to the nucleus. May function as a component of the DRB sensitivity-inducing factor complex (DSIF complex), which regulates transcription elongation by RNA polymerase II. Probably enhances transcriptional pausing at sites proximal to the promoter, which may facilitate the assembly of an elongation competent RNA polymerase II complex. Also acts to stimulate transcriptional elongation at low nucleotide concentrations. Regulation of transcriptional elongation by this protein is required for the expression of genes which control neuronal development. The polypeptide is Transcription elongation factor SPT4 (supt4h1) (Danio rerio (Zebrafish)).